Here is a 2731-residue protein sequence, read N- to C-terminus: Teneurin-m (2731 aa).

2 disordered regions span residues 1–60 and 103–136; these read MNPY…QNQQ and LLEG…NNPN. The Cytoplasmic portion of the chain corresponds to 1–229; the sequence is MNPYEYESTL…RKDLVARCSS (229 aa). Positions 110-119 are enriched in pro residues; it reads TAPPDVPPRN. A compositionally biased stretch (polar residues) spans 120 to 136; it reads PTMSRMQNGRLTVNNPN. The helical transmembrane segment at 230 to 250 threads the bilayer; the sequence is PWFGIGSISVLFAFVVMLILL. Over 251-2731 the chain is Extracellular; sequence TTTGVIKWNQ…RQLKFGELSA (2481 aa). Residues 321-387 are disordered; the sequence is SSAATVTTAT…RTFPARSFPP (67 aa). A compositionally biased stretch (low complexity) spans 322 to 370; sequence SAATVTTATSNSGTAQGLQSTSASAEATSSAATSSSQSSLTPSLSSSLA. EGF-like domains lie at 536 to 572, 574 to 606, 643 to 676, and 738 to 774; these read GGDD…KECS, RHDE…KFCE, DALQ…DDCS, and TIEG…PDCG. Disulfide bonds link Cys-540-Cys-549, Cys-545-Cys-560, Cys-562-Cys-571, Cys-578-Cys-589, Cys-583-Cys-594, Cys-596-Cys-605, Cys-651-Cys-664, Cys-666-Cys-675, Cys-742-Cys-752, Cys-746-Cys-762, and Cys-764-Cys-773. N-linked (GlcNAc...) asparagine glycosylation is present at Asn-857. NHL repeat units lie at residues 1160 to 1201, 1202 to 1246, 1391 to 1434, and 1459 to 1502; these read ECPD…IMTD, GSIR…VRDT, STAY…VRVI, and CFEA…VMSS. Residues 1618–1652 form a YD repeat; the sequence is TGLLRTKLDSTGRSYVYNYDEFGRLTSAVTPTGRV. The segment at 2691 to 2731 is disordered; the sequence is LADDPGNVAFQRDAKRKRRKTGSSHRSASNRRQLKFGELSA. Over residues 2704–2724 the composition is skewed to basic residues; the sequence is AKRKRRKTGSSHRSASNRRQL.

This sequence belongs to the tenascin family. Teneurin subfamily. As to quaternary structure, homodimer. Heterodimer with Ten-a. Interacts with Ten-a; the interaction occurs at the neuromuscular junction. Interacts with alpha-Spec and cher. Post-translationally, phosphorylated. Phosphorylation occurs at tyrosine residues. In terms of processing, proteolytically cleaved. As to expression, expressed in muscles and motor neurons (at protein level).

The protein localises to the cytoplasm. It is found in the postsynaptic cell membrane. Its subcellular location is the synapse. The protein resides in the synaptosome. It localises to the membrane. Its function is as follows. Involved in neural development, regulating the establishment of proper connectivity within the nervous system. Acts as a homophilic and heterophilic synaptic cell adhesion molecule that drives synapse assembly. Promotes bi-directional trans-synaptic signaling with Ten-a to organize neuromuscular synapses. Functions in olfactory synaptic partner matching by promoting homophilic cell adhesion between pre-synaptic olfactory receptor neurons (ORN) axons and post-synaptic projection neurons (PN) dendrites partner in the developing antennal lobe to form stable connections. Also required for peripheral axon growth cone guidance and target recognition of motor neurons. The polypeptide is Teneurin-m (Ten-m) (Drosophila melanogaster (Fruit fly)).